The following is a 630-amino-acid chain: Peptidyl-prolyl cis-trans isomerase cyp15 (630 aa).

Residues 1–46 (MPEDSNTNDNNKRPLEDNNAVDGESDDDIGPMLPPPPGEDAPRKKK) are disordered. WD repeat units follow at residues 70-108 (MHRD…IEFV), 113-152 (SHLS…MINM), 157-198 (YKPK…KPLH), 203-242 (MHSK…ALPD), and 258-301 (RKKK…REYD). One can recognise a PPIase cyclophilin-type domain in the interval 475 to 629 (LGTSAIIRTT…DDIKIINIDI (155 aa)).

Belongs to the cyclophilin-type PPIase family.

The enzyme catalyses [protein]-peptidylproline (omega=180) = [protein]-peptidylproline (omega=0). Its function is as follows. PPIases accelerate the folding of proteins. It catalyzes the cis-trans isomerization of proline imidic peptide bonds in oligopeptides. The protein is Peptidyl-prolyl cis-trans isomerase cyp15 (cyp15) of Rhizopus delemar (strain RA 99-880 / ATCC MYA-4621 / FGSC 9543 / NRRL 43880) (Mucormycosis agent).